We begin with the raw amino-acid sequence, 326 residues long: Type II secretion system protein K (326 aa).

Residues 1-7 (MNHRQRG) constitute a propeptide, leader sequence. The helical transmembrane segment at 8–28 (IALLMVLLILALMMVLASAMT) threads the bilayer. Residues 29-326 (ERSARMYQQT…RYGIYWVADE (298 aa)) lie on the Periplasmic side of the membrane.

It belongs to the GSP K family. Type II secretion is composed of four main components: the outer membrane complex, the inner membrane complex, the cytoplasmic secretion ATPase and the periplasm-spanning pseudopilus. Interacts with core component PulG. In terms of processing, cleaved by prepilin peptidase.

It is found in the cell inner membrane. Its function is as follows. Component of the type II secretion system required for the energy-dependent secretion of extracellular factors such as proteases and toxins from the periplasm. Plays a role in pseudopilus assembly and seems to control its length. Interacts with the pseudopilus tip complex that is critical for the recognition and binding of secretion substrates. This chain is Type II secretion system protein K (pulK), found in Klebsiella pneumoniae.